The following is a 72-amino-acid chain: Aurein-2.3 (72 aa).

A signal peptide spans 1–22 (MAFLKKSLFLVLFLGLVSLSIC). The propeptide occupies 23–49 (EKEKRQNGEDEDENEAANHEEGSEEKR). The tract at residues 27-47 (RQNGEDEDENEAANHEEGSEE) is disordered. Over residues 38–47 (AANHEEGSEE) the composition is skewed to basic and acidic residues. Leucine amide is present on Leu-65. Positions 69–72 (NDVE) are excised as a propeptide.

Post-translationally, amidation is essential for antibacterial activity against Gram-positive bacteria. As to expression, expressed by the skin dorsal glands.

The protein resides in the secreted. It is found in the target cell membrane. Amphipathic alpha-helical antimicrobial peptide with weak to moderate activity against Gram-positive bacteria, and no activity against Gram-negative bacteria. Probably acts by disturbing membrane functions with its amphipathic structure. Strongly inhibits the formation of NO by neuronal nitric oxide synthase (nNOS) at micromolar concentrations. Acts by a non-competitive mechanism, probably by binding to calcium/calmodulin and as a consequence blocking calmodulin attachment to nNOS. The sequence is that of Aurein-2.3 from Ranoidea aurea (Green and golden bell frog).